The following is a 422-amino-acid chain: UDP-N-acetylglucosamine 1-carboxyvinyltransferase (422 aa).

Residue 22 to 23 coordinates phosphoenolpyruvate; that stretch reads KN. Residue Arg-94 coordinates UDP-N-acetyl-alpha-D-glucosamine. The active-site Proton donor is Cys-118. Cys-118 is modified (2-(S-cysteinyl)pyruvic acid O-phosphothioketal). UDP-N-acetyl-alpha-D-glucosamine-binding positions include 123–127, Asp-309, and Ile-331; that span reads RPVDL.

This sequence belongs to the EPSP synthase family. MurA subfamily.

Its subcellular location is the cytoplasm. The catalysed reaction is phosphoenolpyruvate + UDP-N-acetyl-alpha-D-glucosamine = UDP-N-acetyl-3-O-(1-carboxyvinyl)-alpha-D-glucosamine + phosphate. The protein operates within cell wall biogenesis; peptidoglycan biosynthesis. Cell wall formation. Adds enolpyruvyl to UDP-N-acetylglucosamine. The sequence is that of UDP-N-acetylglucosamine 1-carboxyvinyltransferase from Cereibacter sphaeroides (strain ATCC 17025 / ATH 2.4.3) (Rhodobacter sphaeroides).